A 159-amino-acid polypeptide reads, in one-letter code: Neurotrophin-3 (159 aa).

Residues 1–3 (IQS) form the signal peptide. Positions 4–115 (TSMDQGILTE…VQNRTSRRKR (112 aa)) are excised as a propeptide. The interval 91–129 (APLEPPPLYLTEEPLVQNRTSRRKREGKRHRGEYSVCDS) is disordered. Asn108 carries an N-linked (GlcNAc...) asparagine glycan. Residues 110 to 121 (TSRRKREGKRHR) show a composition bias toward basic residues.

Belongs to the NGF-beta family.

Its subcellular location is the secreted. Functionally, seems to promote the survival of visceral and proprioceptive sensory neurons. The polypeptide is Neurotrophin-3 (NTF3) (Candoia carinata (Papuan tree boa)).